A 556-amino-acid polypeptide reads, in one-letter code: DNA ligase B (556 aa).

The N6-AMP-lysine intermediate role is filled by Lys124.

It belongs to the NAD-dependent DNA ligase family. LigB subfamily.

The catalysed reaction is NAD(+) + (deoxyribonucleotide)n-3'-hydroxyl + 5'-phospho-(deoxyribonucleotide)m = (deoxyribonucleotide)n+m + AMP + beta-nicotinamide D-nucleotide.. Its function is as follows. Catalyzes the formation of phosphodiester linkages between 5'-phosphoryl and 3'-hydroxyl groups in double-stranded DNA using NAD as a coenzyme and as the energy source for the reaction. This chain is DNA ligase B, found in Pseudomonas fluorescens (strain ATCC BAA-477 / NRRL B-23932 / Pf-5).